Consider the following 680-residue polypeptide: Tripartite terminase subunit 1 (680 aa).

Residues 180 to 208 (CLECVLETSVVPNQGETLNELLLNHNCHH) form a C3H1-type zinc finger. 610–617 (YNITWEKN) is a binding site for ATP.

It belongs to the herpesviridae TRM1 protein family. As to quaternary structure, associates with TRM2 and TRM3 to form the tripartite terminase complex. Interacts with portal protein.

Its subcellular location is the host nucleus. Component of the molecular motor that translocates viral genomic DNA in empty capsid during DNA packaging. Forms a tripartite terminase complex together with TRM2 and TRM3 in the host cytoplasm. Once the complex reaches the host nucleus, it interacts with the capsid portal vertex. This portal forms a ring in which genomic DNA is translocated into the capsid. TRM1 carries an endonuclease activity that plays an important role for the cleavage of concatemeric viral DNA into unit length genomes. This chain is Tripartite terminase subunit 1, found in Alcelaphine herpesvirus 1 (strain C500) (AlHV-1).